The primary structure comprises 290 residues: 33 kDa chaperonin (290 aa).

2 disulfide bridges follow: Cys-235–Cys-237 and Cys-268–Cys-271.

This sequence belongs to the HSP33 family. Under oxidizing conditions two disulfide bonds are formed involving the reactive cysteines. Under reducing conditions zinc is bound to the reactive cysteines and the protein is inactive.

It localises to the cytoplasm. Redox regulated molecular chaperone. Protects both thermally unfolding and oxidatively damaged proteins from irreversible aggregation. Plays an important role in the bacterial defense system toward oxidative stress. In Streptococcus uberis (strain ATCC BAA-854 / 0140J), this protein is 33 kDa chaperonin.